The chain runs to 225 residues: NAD(P)H-quinone oxidoreductase subunit K, chloroplastic (225 aa).

4 residues coordinate [4Fe-4S] cluster: Cys43, Cys44, Cys108, and Cys139.

This sequence belongs to the complex I 20 kDa subunit family. As to quaternary structure, NDH is composed of at least 16 different subunits, 5 of which are encoded in the nucleus. It depends on [4Fe-4S] cluster as a cofactor.

It localises to the plastid. Its subcellular location is the chloroplast thylakoid membrane. It catalyses the reaction a plastoquinone + NADH + (n+1) H(+)(in) = a plastoquinol + NAD(+) + n H(+)(out). The enzyme catalyses a plastoquinone + NADPH + (n+1) H(+)(in) = a plastoquinol + NADP(+) + n H(+)(out). Functionally, NDH shuttles electrons from NAD(P)H:plastoquinone, via FMN and iron-sulfur (Fe-S) centers, to quinones in the photosynthetic chain and possibly in a chloroplast respiratory chain. The immediate electron acceptor for the enzyme in this species is believed to be plastoquinone. Couples the redox reaction to proton translocation, and thus conserves the redox energy in a proton gradient. The chain is NAD(P)H-quinone oxidoreductase subunit K, chloroplastic from Atropa belladonna (Belladonna).